A 78-amino-acid polypeptide reads, in one-letter code: Structural DNA-binding protein p10 (78 aa).

Low complexity predominate over residues 1-25; that stretch reads MPTKAGTKSTANKKTTKGSSKSGSA. Positions 1–41 are disordered; sequence MPTKAGTKSTANKKTTKGSSKSGSARGHTGKTHAPPSMHSG.

This sequence belongs to the asfivirus P10 family.

It localises to the virion. In terms of biological role, may play a role in genome packaging through direct interaction with viral DNA. Binds to ssDNA and dsDNA with the same apparent affinity in vitro. The chain is Structural DNA-binding protein p10 from African swine fever virus (isolate Warthog/Namibia/Wart80/1980) (ASFV).